A 126-amino-acid polypeptide reads, in one-letter code: Protein K7 (126 aa).

Residues 24–44 (LPLHLWILCSLLAFLPLLVFI) traverse the membrane as a helical segment.

In terms of assembly, interacts with host CAMLG; this interaction allows efficient apoptosis inhibition. Additionally, interacts with vGPCR/ORF74 and induces its proteasomeal degradation.

The protein resides in the host membrane. It localises to the host mitochondrion. Its function is as follows. Plays a role in the inhibition of host apoptosis to allow completion of the viral lytic replication and may thus favor the maintenance of persistent infection in infected host. This Homo sapiens (Human) protein is Protein K7 (K7).